The sequence spans 292 residues: AKT-interacting protein (292 aa).

Residues 1-63 (MNPLWSMSAG…TSPAPAAQST (63 aa)) form a disordered region. Positions 14–23 (KRAEGEEKTL) are enriched in basic and acidic residues. Phosphoserine is present on S30. A UBC core domain is found at 74–222 (YLEYSLLAEF…VVDSVKVCTA (149 aa)).

Belongs to the ubiquitin-conjugating enzyme family. FTS subfamily. In terms of assembly, component of the FTS/Hook/FHIP complex (FHF complex), composed of AKTIP/FTS, FHIP1B, and one or more members of the Hook family of proteins HOOK1, HOOK2, and HOOK3. Interacts directly with HOOK1, HOOK2 and HOOK3. The FHF complex associates with the homotypic vesicular sorting complex (the HOPS complex). Also interacts with AKT1. May interact with FHIP1A. As to expression, ubiquitous. Highest expression in kidney, testis and brain and lowest in spleen and liver.

The protein resides in the cytoplasm. Its subcellular location is the cell membrane. Functionally, component of the FTS/Hook/FHIP complex (FHF complex). The FHF complex may function to promote vesicle trafficking and/or fusion via the homotypic vesicular protein sorting complex (the HOPS complex). Regulates apoptosis by enhancing phosphorylation and activation of AKT1. Increases release of TNFSF6 via the AKT1/GSK3B/NFATC1 signaling cascade. FHF complex promotes the distribution of AP-4 complex to the perinuclear area of the cell. The protein is AKT-interacting protein (Aktip) of Mus musculus (Mouse).